The sequence spans 417 residues: Serine hydroxymethyltransferase (417 aa).

(6S)-5,6,7,8-tetrahydrofolate-binding positions include Leu-120 and Gly-124–Leu-126. Position 229 is an N6-(pyridoxal phosphate)lysine (Lys-229). Ser-354–Phe-356 serves as a coordination point for (6S)-5,6,7,8-tetrahydrofolate.

It belongs to the SHMT family. Homodimer. Requires pyridoxal 5'-phosphate as cofactor.

Its subcellular location is the cytoplasm. It catalyses the reaction (6R)-5,10-methylene-5,6,7,8-tetrahydrofolate + glycine + H2O = (6S)-5,6,7,8-tetrahydrofolate + L-serine. It functions in the pathway one-carbon metabolism; tetrahydrofolate interconversion. It participates in amino-acid biosynthesis; glycine biosynthesis; glycine from L-serine: step 1/1. Its function is as follows. Catalyzes the reversible interconversion of serine and glycine with tetrahydrofolate (THF) serving as the one-carbon carrier. This reaction serves as the major source of one-carbon groups required for the biosynthesis of purines, thymidylate, methionine, and other important biomolecules. Also exhibits THF-independent aldolase activity toward beta-hydroxyamino acids, producing glycine and aldehydes, via a retro-aldol mechanism. The polypeptide is Serine hydroxymethyltransferase (Acinetobacter baylyi (strain ATCC 33305 / BD413 / ADP1)).